A 367-amino-acid chain; its full sequence is Protein NDRG4-B (367 aa).

The span at 1 to 12 shows a compositional bias: basic and acidic residues; that stretch reads MSELRFPEEKPL. Disordered stretches follow at residues 1 to 21 and 333 to 367; these read MSEL…TEME and LTSA…EVSC. Positions 347-367 are enriched in polar residues; sequence CTQSESSDGIGQINHTMEVSC.

The protein belongs to the NDRG family.

It is found in the cytoplasm. Its subcellular location is the cytosol. In terms of biological role, contributes to the maintenance of intracerebral BDNF levels within the normal range. May enhance growth factor-induced ERK1 and ERK2 phosphorylation. May attenuate growth factor-promoted ELK1 phosphorylation in a microtubule-dependent manner. This Xenopus laevis (African clawed frog) protein is Protein NDRG4-B (ndrg4-b).